A 235-amino-acid chain; its full sequence is Large ribosomal subunit protein uL1 (235 aa).

The protein belongs to the universal ribosomal protein uL1 family. Part of the 50S ribosomal subunit.

In terms of biological role, binds directly to 23S rRNA. The L1 stalk is quite mobile in the ribosome, and is involved in E site tRNA release. Its function is as follows. Protein L1 is also a translational repressor protein, it controls the translation of the L11 operon by binding to its mRNA. In Pseudarthrobacter chlorophenolicus (strain ATCC 700700 / DSM 12829 / CIP 107037 / JCM 12360 / KCTC 9906 / NCIMB 13794 / A6) (Arthrobacter chlorophenolicus), this protein is Large ribosomal subunit protein uL1.